A 106-amino-acid chain; its full sequence is Large ribosomal subunit protein eL42 (106 aa).

It belongs to the eukaryotic ribosomal protein eL42 family.

The chain is Large ribosomal subunit protein eL42 (RPL44) from Debaryomyces hansenii (strain ATCC 36239 / CBS 767 / BCRC 21394 / JCM 1990 / NBRC 0083 / IGC 2968) (Yeast).